Here is a 62-residue protein sequence, read N- to C-terminus: MRCLPVFIILLLLIASAPSFDALPKTEDNVPLSSFHDNLKRTRRIHLNIRECCSDGWCCPAG.

Positions Met-1–Ser-19 are cleaved as a signal peptide. A propeptide spanning residues Phe-20–Ile-49 is cleaved from the precursor. Position 61 is an alanine amide (Ala-61).

It belongs to the conotoxin T superfamily. In terms of processing, contains 2 disulfide bonds that can be either 'C1-C3, C2-C4' or 'C1-C4, C2-C3', since these disulfide connectivities have been observed for conotoxins with cysteine framework V (for examples, see AC P0DQQ7 and AC P81755). In terms of tissue distribution, expressed by the venom duct.

It localises to the secreted. The protein is Conotoxin Pn-B02 of Conus pennaceus (Feathered cone).